Here is a 127-residue protein sequence, read N- to C-terminus: Small ribosomal subunit protein uS11 (127 aa).

It belongs to the universal ribosomal protein uS11 family. Part of the 30S ribosomal subunit. Interacts with proteins S7 and S18. Binds to IF-3.

Its function is as follows. Located on the platform of the 30S subunit, it bridges several disparate RNA helices of the 16S rRNA. Forms part of the Shine-Dalgarno cleft in the 70S ribosome. This Streptococcus thermophilus (strain CNRZ 1066) protein is Small ribosomal subunit protein uS11.